A 104-amino-acid polypeptide reads, in one-letter code: MPEADLSILNRVYDIILDRKENYDENSYVCKLLNHRKGMNKILEKVGEESIETILAVRNEDHKEIVSESSDLIFHLLVLLAANNVTLDEIAGELSARHEKMKRD.

This sequence belongs to the PRA-PH family.

The protein localises to the cytoplasm. It catalyses the reaction 1-(5-phospho-beta-D-ribosyl)-ATP + H2O = 1-(5-phospho-beta-D-ribosyl)-5'-AMP + diphosphate + H(+). The protein operates within amino-acid biosynthesis; L-histidine biosynthesis; L-histidine from 5-phospho-alpha-D-ribose 1-diphosphate: step 2/9. The protein is Phosphoribosyl-ATP pyrophosphatase (hisE) of Methanosarcina acetivorans (strain ATCC 35395 / DSM 2834 / JCM 12185 / C2A).